The sequence spans 424 residues: Histidinol dehydrogenase homolog (424 aa).

Zn(2+)-binding residues include Q250 and H253. Residues E318 and H319 each act as proton acceptor in the active site. Zn(2+) contacts are provided by D352 and H411.

The protein belongs to the histidinol dehydrogenase family. It depends on Zn(2+) as a cofactor.

The chain is Histidinol dehydrogenase homolog from Shouchella clausii (strain KSM-K16) (Alkalihalobacillus clausii).